A 598-amino-acid polypeptide reads, in one-letter code: Aspartate--tRNA(Asp/Asn) ligase (598 aa).

Glu-173 contacts L-aspartate. The aspartate stretch occupies residues 197-200; that stretch reads QLFK. Arg-219 provides a ligand contact to L-aspartate. Residues 219 to 221 and Gln-228 each bind ATP; that span reads RDE. His-448 is a binding site for L-aspartate. ATP is bound at residue Glu-482. Residue Arg-489 participates in L-aspartate binding. Position 534 to 537 (534 to 537) interacts with ATP; that stretch reads GWDR. The interval 560–598 is disordered; sequence GYDPLTAAPAPITAQQRKEAGVDAKPETKKAAAGEPAGA. The segment covering 575 to 591 has biased composition (basic and acidic residues); that stretch reads QRKEAGVDAKPETKKAA.

It belongs to the class-II aminoacyl-tRNA synthetase family. Type 1 subfamily. In terms of assembly, homodimer.

Its subcellular location is the cytoplasm. The catalysed reaction is tRNA(Asx) + L-aspartate + ATP = L-aspartyl-tRNA(Asx) + AMP + diphosphate. In terms of biological role, aspartyl-tRNA synthetase with relaxed tRNA specificity since it is able to aspartylate not only its cognate tRNA(Asp) but also tRNA(Asn). Reaction proceeds in two steps: L-aspartate is first activated by ATP to form Asp-AMP and then transferred to the acceptor end of tRNA(Asp/Asn). The sequence is that of Aspartate--tRNA(Asp/Asn) ligase from Kineococcus radiotolerans (strain ATCC BAA-149 / DSM 14245 / SRS30216).